Consider the following 353-residue polypeptide: MISHYIRFKIMTNILLSPEKSENDQELPIRPSYLQEFVGQQQIKENLSVFIKAAKSRNEHLDHTLFYGPPGLGKTTLAKIISNEIGGNFKSTSGPAILKVADLAAILTNLERNDVLFIDEIHRLNTAVEEVLYPAMEDFELDIIIGEGSAARSVKITLPKFTLIGATTRLGLLSNPLRDRFGIPMRLNFYNTEELKKVLNRASKLLDIDLTDSGSEEIAKRSRGTPRIALRLLRRIRDFAAVDGKSRVDKEISDFGLNRLEVDRIGLDSNDYRYLKFIADNYNGGPVGIETIAAALSEQRDALEETIEPYLIQIGLLQRTPRGRVITIAAFEHLKMPVPNQSHHQFNIFNEHE.

The large ATPase domain (RuvB-L) stretch occupies residues 4–190 (HYIRFKIMTN…FGIPMRLNFY (187 aa)). ATP contacts are provided by residues I29, R30, G71, K74, T75, T76, 137-139 (EDF), R180, Y190, and R227. Position 75 (T75) interacts with Mg(2+). The segment at 191-261 (NTEELKKVLN…ISDFGLNRLE (71 aa)) is small ATPAse domain (RuvB-S). The head domain (RuvB-H) stretch occupies residues 264–353 (RIGLDSNDYR…HQFNIFNEHE (90 aa)). DNA is bound by residues R300, R319, and R324.

This sequence belongs to the RuvB family. Homohexamer. Forms an RuvA(8)-RuvB(12)-Holliday junction (HJ) complex. HJ DNA is sandwiched between 2 RuvA tetramers; dsDNA enters through RuvA and exits via RuvB. An RuvB hexamer assembles on each DNA strand where it exits the tetramer. Each RuvB hexamer is contacted by two RuvA subunits (via domain III) on 2 adjacent RuvB subunits; this complex drives branch migration. In the full resolvosome a probable DNA-RuvA(4)-RuvB(12)-RuvC(2) complex forms which resolves the HJ.

The protein localises to the cytoplasm. It catalyses the reaction ATP + H2O = ADP + phosphate + H(+). In terms of biological role, the RuvA-RuvB-RuvC complex processes Holliday junction (HJ) DNA during genetic recombination and DNA repair, while the RuvA-RuvB complex plays an important role in the rescue of blocked DNA replication forks via replication fork reversal (RFR). RuvA specifically binds to HJ cruciform DNA, conferring on it an open structure. The RuvB hexamer acts as an ATP-dependent pump, pulling dsDNA into and through the RuvAB complex. RuvB forms 2 homohexamers on either side of HJ DNA bound by 1 or 2 RuvA tetramers; 4 subunits per hexamer contact DNA at a time. Coordinated motions by a converter formed by DNA-disengaged RuvB subunits stimulates ATP hydrolysis and nucleotide exchange. Immobilization of the converter enables RuvB to convert the ATP-contained energy into a lever motion, pulling 2 nucleotides of DNA out of the RuvA tetramer per ATP hydrolyzed, thus driving DNA branch migration. The RuvB motors rotate together with the DNA substrate, which together with the progressing nucleotide cycle form the mechanistic basis for DNA recombination by continuous HJ branch migration. Branch migration allows RuvC to scan DNA until it finds its consensus sequence, where it cleaves and resolves cruciform DNA. The sequence is that of Holliday junction branch migration complex subunit RuvB from Rickettsia massiliae (strain Mtu5).